Consider the following 691-residue polypeptide: MSRSTPLKKVRNIGIAAHIDAGKTTTSERILFFTGMSHKIGEVHDGAATMDWMEQEKERGITITSAATTCFWKDHQINLIDTPGHVDFTIEVERSMRVLDGAVAVFCSVGGVQPQSETVWRQANKYGVPRIVFVNKMDRIGANFYNVEDQIRNRLKANPVPLQIPIGAEDNFKGVIDLVTMKALVWEDDTKPTDYVEKEIPAELKEKAEEYRTKMIEAVSETSDELMEKYLGGEELSLEEIKTGIKAGCLSLSIVPMLCGTAFKNKGVQPLLDAVVAYLPAPDEVANIKGEYEDGTEVSVKSTDDGEFAGLAFKIMTDPFVGQLTFVRVYRGCLESGSYAYNSTKDKKERIGRLLKMHSNKREEIKVLYAGEIGAVVGLKDTLTGDTLASEKDKVILERMDFPDPVISVAVEPKTKADQEKMSIALNKLAQEDPSFRVSTDEESGQTIISGMGELHLEIIVDRMLREFKVEAEVGQPQVAYRETIRKAVEQEYKYAKQSGGRGQYGHVFLRLEPLEPGSGYEFVNDIKGGVIPKEYIPAVDKGVQEALQNGVLAGYPVEDVKVTVYDGSYHEVDSSEMAFKLAASMGFKEGARKAGAVILEPMMKVEVETPEDYMGDVIGDLNKRRGQVNSMDERGGNKIITAFCPLAEMFGYSTDLRSQTQGRATYSMEFNHYDEVPKNVADEIIKKRNG.

The tr-type G domain occupies 8 to 283 (KKVRNIGIAA…AVVAYLPAPD (276 aa)). GTP-binding positions include 17–24 (AHIDAGKT), 81–85 (DTPGH), and 135–138 (NKMD).

Belongs to the TRAFAC class translation factor GTPase superfamily. Classic translation factor GTPase family. EF-G/EF-2 subfamily.

The protein localises to the cytoplasm. Functionally, catalyzes the GTP-dependent ribosomal translocation step during translation elongation. During this step, the ribosome changes from the pre-translocational (PRE) to the post-translocational (POST) state as the newly formed A-site-bound peptidyl-tRNA and P-site-bound deacylated tRNA move to the P and E sites, respectively. Catalyzes the coordinated movement of the two tRNA molecules, the mRNA and conformational changes in the ribosome. In Campylobacter jejuni subsp. doylei (strain ATCC BAA-1458 / RM4099 / 269.97), this protein is Elongation factor G.